A 793-amino-acid polypeptide reads, in one-letter code: Serine/threonine-protein phosphatase 1 regulatory subunit GAC1 (793 aa).

The span at 1–10 (MVIQTATTLS) shows a compositional bias: polar residues. Residues 1 to 20 (MVIQTATTLSPAKARPSFPH) form a disordered region. Residues 235–360 (TKYLNGQNVK…NNNGKNYHLF (126 aa)) form the CBM21 domain. Phosphoserine occurs at positions 415 and 424. Disordered stretches follow at residues 450 to 491 (LENA…SIDL) and 616 to 671 (TTMD…LNDH). Residues 623-633 (KTSTINNSTDT) are compositionally biased toward polar residues. Residues 637 to 648 (PSKENGTVKENK) show a composition bias toward basic and acidic residues. The span at 649 to 665 (SSANSTSAPSSSQNRAS) shows a compositional bias: low complexity.

Regulates the activity of glycogen synthase. It is most probably a regulatory subunit for protein phosphatase type 1. This chain is Serine/threonine-protein phosphatase 1 regulatory subunit GAC1 (GAC1), found in Saccharomyces cerevisiae (strain ATCC 204508 / S288c) (Baker's yeast).